A 705-amino-acid polypeptide reads, in one-letter code: 1,4-alpha-glucan branching enzyme GlgB (705 aa).

Asp309 acts as the Nucleophile in catalysis. Glu360 (proton donor) is an active-site residue. The tract at residues 654-705 (VQVERAADPRPNEQQRLVAETPAHEGGRSAPADAAESAEQKPDDEQKGGKKA) is disordered. Basic and acidic residues predominate over residues 691-705 (AEQKPDDEQKGGKKA).

Belongs to the glycosyl hydrolase 13 family. GlgB subfamily. As to quaternary structure, monomer.

It carries out the reaction Transfers a segment of a (1-&gt;4)-alpha-D-glucan chain to a primary hydroxy group in a similar glucan chain.. It participates in glycan biosynthesis; glycogen biosynthesis. Functionally, catalyzes the formation of the alpha-1,6-glucosidic linkages in glycogen by scission of a 1,4-alpha-linked oligosaccharide from growing alpha-1,4-glucan chains and the subsequent attachment of the oligosaccharide to the alpha-1,6 position. This is 1,4-alpha-glucan branching enzyme GlgB from Deinococcus radiodurans (strain ATCC 13939 / DSM 20539 / JCM 16871 / CCUG 27074 / LMG 4051 / NBRC 15346 / NCIMB 9279 / VKM B-1422 / R1).